Reading from the N-terminus, the 82-residue chain is UPF0213 protein SERP0126 (82 aa).

The GIY-YIG domain occupies 2-77; it reads DKHFVYIVKC…KTYTRQQKLK (76 aa).

The protein belongs to the UPF0213 family.

The sequence is that of UPF0213 protein SERP0126 from Staphylococcus epidermidis (strain ATCC 35984 / DSM 28319 / BCRC 17069 / CCUG 31568 / BM 3577 / RP62A).